A 158-amino-acid polypeptide reads, in one-letter code: SsrA-binding protein (158 aa).

The protein belongs to the SmpB family.

Its subcellular location is the cytoplasm. Its function is as follows. Required for rescue of stalled ribosomes mediated by trans-translation. Binds to transfer-messenger RNA (tmRNA), required for stable association of tmRNA with ribosomes. tmRNA and SmpB together mimic tRNA shape, replacing the anticodon stem-loop with SmpB. tmRNA is encoded by the ssrA gene; the 2 termini fold to resemble tRNA(Ala) and it encodes a 'tag peptide', a short internal open reading frame. During trans-translation Ala-aminoacylated tmRNA acts like a tRNA, entering the A-site of stalled ribosomes, displacing the stalled mRNA. The ribosome then switches to translate the ORF on the tmRNA; the nascent peptide is terminated with the 'tag peptide' encoded by the tmRNA and targeted for degradation. The ribosome is freed to recommence translation, which seems to be the essential function of trans-translation. The polypeptide is SsrA-binding protein (Bifidobacterium longum (strain DJO10A)).